The sequence spans 1010 residues: Translation initiation factor IF-2 (1010 aa).

2 disordered regions span residues 54 to 350 and 364 to 420; these read KGLA…FEDD and PSFT…RPES. Residues 57–70 show a composition bias toward polar residues; the sequence is ASSTSKNSTGQRES. Residues 112 to 124 are compositionally biased toward pro residues; sequence ISPPRPPVKPLVA. The span at 145 to 155 shows a compositional bias: polar residues; the sequence is HSPSVKETPTE. Positions 200–258 are enriched in basic and acidic residues; sequence DRPRGEKRERGESENAPSPERRVGLAKPEKPTLNRKPDGKSPKLAEPAREVRETVELKR. Residues 378–389 show a composition bias toward low complexity; sequence TAKAAPPGTPTA. Residues 406–419 show a composition bias toward basic and acidic residues; that stretch reads KSERQEPQEEKRPE. Positions 502–675 constitute a tr-type G domain; it reads RRPPVVTIMG…LLVAEVEELV (174 aa). Positions 511 to 518 are G1; it reads GHVDHGKT. Residue 511–518 participates in GTP binding; it reads GHVDHGKT. The tract at residues 536 to 540 is G2; it reads GITQH. Positions 561–564 are G3; that stretch reads DTPG. Residues 561-565 and 615-618 contribute to the GTP site; these read DTPGH and NKVD. Residues 615–618 are G4; sequence NKVD. The tract at residues 651-653 is G5; the sequence is SAL.

The protein belongs to the TRAFAC class translation factor GTPase superfamily. Classic translation factor GTPase family. IF-2 subfamily.

It localises to the cytoplasm. In terms of biological role, one of the essential components for the initiation of protein synthesis. Protects formylmethionyl-tRNA from spontaneous hydrolysis and promotes its binding to the 30S ribosomal subunits. Also involved in the hydrolysis of GTP during the formation of the 70S ribosomal complex. The sequence is that of Translation initiation factor IF-2 from Microcystis aeruginosa (strain NIES-843 / IAM M-2473).